The sequence spans 211 residues: Probable metallo-hydrolase YqgX (211 aa).

Zn(2+)-binding residues include H54, H56, D58, H59, H130, D149, and H190.

Belongs to the metallo-beta-lactamase superfamily. Glyoxalase II family. The cofactor is Zn(2+).

This chain is Probable metallo-hydrolase YqgX (yqgX), found in Bacillus subtilis (strain 168).